The sequence spans 626 residues: DEAD-box ATP-dependent RNA helicase 16 (626 aa).

The disordered stretch occupies residues 1 to 48; it reads MGKTKLKPVEDVNSEVVDEVEKAEEVEEQRNDREQEEEQKEEEAPKSF. Residues 9 to 47 are a coiled coil; it reads VEDVNSEVVDEVEKAEEVEEQRNDREQEEEQKEEEAPKS. Residues 12–27 show a composition bias toward acidic residues; it reads VNSEVVDEVEKAEEVE. Positions 46-74 match the Q motif motif; the sequence is KSFEELGLDSRLIRALTKKGIEKPTLIQQ. The 183-residue stretch at 77–259 folds into the Helicase ATP-binding domain; that stretch reads IPYILEGKDV…KLILHNPIVL (183 aa). ATP is bound at residue 90–97; sequence AKTGSGKT. Positions 207–210 match the DEAD box motif; the sequence is DEAD. Residues 293-477 form the Helicase C-terminal domain; that stretch reads ALLKLEVVQK…PFPLLTENAV (185 aa). The stretch at 356-385 forms a coiled coil; that stretch reads IATDDNSQTKKQKEEAKGEANKENKKNNKR. A compositionally biased stretch (basic and acidic residues) spans 363–381; that stretch reads QTKKQKEEAKGEANKENKK. Disordered regions lie at residues 363 to 388 and 568 to 626; these read QTKK…RSKP and AMGN…QKTV.

Belongs to the DEAD box helicase family. DDX56/DBP9 subfamily.

The enzyme catalyses ATP + H2O = ADP + phosphate + H(+). The sequence is that of DEAD-box ATP-dependent RNA helicase 16 (RH16) from Arabidopsis thaliana (Mouse-ear cress).